Here is a 132-residue protein sequence, read N- to C-terminus: L-ectoine synthase (132 aa).

The protein belongs to the ectoine synthase family.

It carries out the reaction (2S)-4-acetamido-2-aminobutanoate = L-ectoine + H2O. The protein operates within amine and polyamine biosynthesis; ectoine biosynthesis; L-ectoine from L-aspartate 4-semialdehyde: step 3/3. Its function is as follows. Catalyzes the circularization of gamma-N-acetyl-alpha,gamma-diaminobutyric acid (ADABA) to ectoine (1,4,5,6-tetrahydro-2-methyl-4-pyrimidine carboxylic acid), which is an excellent osmoprotectant. The polypeptide is L-ectoine synthase (Saccharophagus degradans (strain 2-40 / ATCC 43961 / DSM 17024)).